A 263-amino-acid polypeptide reads, in one-letter code: Hydroxyacylglutathione hydrolase (263 aa).

Zn(2+) is bound by residues H56, H58, D60, H61, H115, D135, and H175.

The protein belongs to the metallo-beta-lactamase superfamily. Glyoxalase II family. In terms of assembly, monomer. It depends on Zn(2+) as a cofactor.

The enzyme catalyses an S-(2-hydroxyacyl)glutathione + H2O = a 2-hydroxy carboxylate + glutathione + H(+). Its pathway is secondary metabolite metabolism; methylglyoxal degradation; (R)-lactate from methylglyoxal: step 2/2. Its function is as follows. Thiolesterase that catalyzes the hydrolysis of S-D-lactoyl-glutathione to form glutathione and D-lactic acid. The protein is Hydroxyacylglutathione hydrolase of Polaromonas sp. (strain JS666 / ATCC BAA-500).